A 348-amino-acid polypeptide reads, in one-letter code: tRNA N6-adenosine threonylcarbamoyltransferase (348 aa).

2 residues coordinate Fe cation: His120 and His124. Residues 143 to 147, Asp176, Gly189, and Asn282 each bind substrate; that span reads LVSGG. Asp310 is a Fe cation binding site.

This sequence belongs to the KAE1 / TsaD family. It depends on Fe(2+) as a cofactor.

The protein localises to the cytoplasm. The catalysed reaction is L-threonylcarbamoyladenylate + adenosine(37) in tRNA = N(6)-L-threonylcarbamoyladenosine(37) in tRNA + AMP + H(+). In terms of biological role, required for the formation of a threonylcarbamoyl group on adenosine at position 37 (t(6)A37) in tRNAs that read codons beginning with adenine. Is involved in the transfer of the threonylcarbamoyl moiety of threonylcarbamoyl-AMP (TC-AMP) to the N6 group of A37, together with TsaE and TsaB. TsaD likely plays a direct catalytic role in this reaction. The polypeptide is tRNA N6-adenosine threonylcarbamoyltransferase (Paracidovorax citrulli (strain AAC00-1) (Acidovorax citrulli)).